Here is a 226-residue protein sequence, read N- to C-terminus: Pro-opiomelanocortin (226 aa).

The signal sequence occupies residues 1 to 22; that stretch reads MVCAPWLLAVVVVCVCNPGVGG. A propeptide spanning residues 23–97 is cleaved from the precursor; sequence QCWDSSHCKD…DPEPHSDKRH (75 aa). Ser98 is subject to N-acetylserine; in Corticotropin. Tyr198 is subject to N-acetyltyrosine; in Beta-endorphin and Met-enkephalin.

Belongs to the POMC family. Specific enzymatic cleavages at paired basic residues yield the different active peptides.

Its subcellular location is the secreted. Functionally, stimulates the adrenal glands to release cortisol. In terms of biological role, anorexigenic peptide. Increases the pigmentation of skin by increasing melanin production in melanocytes. Its function is as follows. Increases the pigmentation of skin by increasing melanin production in melanocytes. Endogenous orexigenic opiate. Functionally, endogenous opiate. The sequence is that of Pro-opiomelanocortin (pomc) from Oncorhynchus keta (Chum salmon).